We begin with the raw amino-acid sequence, 481 residues long: Hyaluronidase-4 (481 aa).

Over 1–8 (MKVLSEGQ) the chain is Cytoplasmic. The helical transmembrane segment at 9–29 (LKLCVVQPVHLTSWLLIFFIL) threads the bilayer. Over 30–453 (KSISCLKPAR…ADCREIKTAD (424 aa)) the chain is Extracellular. 5 disulfides stabilise this stretch: Cys-59–Cys-351, Cys-223–Cys-237, Cys-376–Cys-387, Cys-381–Cys-435, and Cys-437–Cys-446. N-linked (GlcNAc...) asparagine glycosylation is found at Asn-86 and Asn-115. Glu-147 (proton donor) is an active-site residue. Asn-177 carries N-linked (GlcNAc...) (complex) asparagine glycosylation. Asn-343 carries an N-linked (GlcNAc...) asparagine glycan. Residues 454–474 (GCSGVSPSPGSLMTLCLLLLA) form a helical membrane-spanning segment. Residues 475–481 (SYRSIQL) lie on the Cytoplasmic side of the membrane.

This sequence belongs to the glycosyl hydrolase 56 family. Detected in placenta and skeletal muscle.

The protein localises to the membrane. The enzyme catalyses Random hydrolysis of (1-&gt;4)-linkages between N-acetyl-beta-D-glucosamine and D-glucuronate residues in hyaluronate.. In terms of biological role, endo-hyaluronidase that degrades hyaluronan to smaller oligosaccharide fragments. Also has chondroitin sulfate hydrolase activity, The best substrate being the galactosaminidic linkage in the sequence of a trisulfated tetrasaccharide. The polypeptide is Hyaluronidase-4 (HYAL4) (Homo sapiens (Human)).